A 206-amino-acid chain; its full sequence is Protein GrpE (206 aa).

This sequence belongs to the GrpE family. As to quaternary structure, homodimer.

The protein resides in the cytoplasm. Its function is as follows. Participates actively in the response to hyperosmotic and heat shock by preventing the aggregation of stress-denatured proteins, in association with DnaK and GrpE. It is the nucleotide exchange factor for DnaK and may function as a thermosensor. Unfolded proteins bind initially to DnaJ; upon interaction with the DnaJ-bound protein, DnaK hydrolyzes its bound ATP, resulting in the formation of a stable complex. GrpE releases ADP from DnaK; ATP binding to DnaK triggers the release of the substrate protein, thus completing the reaction cycle. Several rounds of ATP-dependent interactions between DnaJ, DnaK and GrpE are required for fully efficient folding. The chain is Protein GrpE from Shewanella baltica (strain OS223).